A 156-amino-acid polypeptide reads, in one-letter code: SsrA-binding protein (156 aa).

The protein belongs to the SmpB family.

The protein localises to the cytoplasm. In terms of biological role, required for rescue of stalled ribosomes mediated by trans-translation. Binds to transfer-messenger RNA (tmRNA), required for stable association of tmRNA with ribosomes. tmRNA and SmpB together mimic tRNA shape, replacing the anticodon stem-loop with SmpB. tmRNA is encoded by the ssrA gene; the 2 termini fold to resemble tRNA(Ala) and it encodes a 'tag peptide', a short internal open reading frame. During trans-translation Ala-aminoacylated tmRNA acts like a tRNA, entering the A-site of stalled ribosomes, displacing the stalled mRNA. The ribosome then switches to translate the ORF on the tmRNA; the nascent peptide is terminated with the 'tag peptide' encoded by the tmRNA and targeted for degradation. The ribosome is freed to recommence translation, which seems to be the essential function of trans-translation. The polypeptide is SsrA-binding protein (Bacillus velezensis (strain DSM 23117 / BGSC 10A6 / LMG 26770 / FZB42) (Bacillus amyloliquefaciens subsp. plantarum)).